A 608-amino-acid chain; its full sequence is Signal transduction histidine-protein kinase AtoS (608 aa).

Residues 1 to 15 lie on the Cytoplasmic side of the membrane; sequence MHYMKWIYPRRLRNQ. The chain crosses the membrane as a helical span at residues 16–36; that stretch reads MILMAILMVIVPTLTIGYIVE. Residues 37 to 189 lie on the Periplasmic side of the membrane; it reads TEGRSAVLSE…DIRRQAWKMD (153 aa). A helical transmembrane segment spans residues 190–210; sequence VRIIIVLTAGLLISLLLIVLF. The Cytoplasmic segment spans residues 211-608; the sequence is SRRLSANIDI…PINPQGNQTV (398 aa). Residues 212–262 enclose the HAMP domain; sequence RRLSANIDIITDGLSTLAQNIPTRLPQLPGEMGQISQSVNNLAQALRETRT. A PAS domain is found at 260 to 305; that stretch reads TRTLNDLIIENAADGVIAIDRQGDVTTMNPAAEVITGYQRHELVGQ. The PAC domain occupies 326–382; that stretch reads HGTEHVALEISFPGRDRTIELSVTTSRIHNTHGEMIGALVIFSDLTARKETQRRMAQ. The 208-residue stretch at 395–602 folds into the Histidine kinase domain; sequence GVAHEVRNPL…TFTLILPINP (208 aa). A Phosphohistidine; by autocatalysis modification is found at histidine 398.

In terms of assembly, homodimer. Post-translationally, autophosphorylated. Each AtoS molecule may phosphorylate its partner within the dimer rather than phosphorylating itself.

It is found in the cell inner membrane. It catalyses the reaction ATP + protein L-histidine = ADP + protein N-phospho-L-histidine.. Member of the two-component regulatory system AtoS/AtoC. In the presence of acetoacetate, AtoS/AtoC stimulates the expression of the atoDAEB operon, leading to short chain fatty acid catabolism and activation of the poly-(R)-3-hydroxybutyrate (cPHB) biosynthetic pathway. Also induces the operon in response to spermidine. Involved in the regulation of motility and chemotaxis, via transcriptional induction of the flagellar regulon. AtoS is a membrane-associated kinase that phosphorylates and activates AtoC in response to environmental signals. This Escherichia coli (strain K12) protein is Signal transduction histidine-protein kinase AtoS (atoS).